We begin with the raw amino-acid sequence, 199 residues long: dITP/XTP pyrophosphatase (199 aa).

Thr7–Lys12 is a substrate binding site. Residues Glu41 and Asp70 each contribute to the Mg(2+) site. The active-site Proton acceptor is Asp70. Residues Ser71, Phe154–Asp157, Lys177, and His182–Arg183 each bind substrate.

This sequence belongs to the HAM1 NTPase family. As to quaternary structure, homodimer. Requires Mg(2+) as cofactor.

It carries out the reaction XTP + H2O = XMP + diphosphate + H(+). It catalyses the reaction dITP + H2O = dIMP + diphosphate + H(+). The enzyme catalyses ITP + H2O = IMP + diphosphate + H(+). Functionally, pyrophosphatase that catalyzes the hydrolysis of nucleoside triphosphates to their monophosphate derivatives, with a high preference for the non-canonical purine nucleotides XTP (xanthosine triphosphate), dITP (deoxyinosine triphosphate) and ITP. Seems to function as a house-cleaning enzyme that removes non-canonical purine nucleotides from the nucleotide pool, thus preventing their incorporation into DNA/RNA and avoiding chromosomal lesions. The protein is dITP/XTP pyrophosphatase of Protochlamydia amoebophila (strain UWE25).